The sequence spans 195 residues: Imidazoleglycerol-phosphate dehydratase (195 aa).

This sequence belongs to the imidazoleglycerol-phosphate dehydratase family.

It localises to the cytoplasm. It carries out the reaction D-erythro-1-(imidazol-4-yl)glycerol 3-phosphate = 3-(imidazol-4-yl)-2-oxopropyl phosphate + H2O. It functions in the pathway amino-acid biosynthesis; L-histidine biosynthesis; L-histidine from 5-phospho-alpha-D-ribose 1-diphosphate: step 6/9. This chain is Imidazoleglycerol-phosphate dehydratase, found in Shouchella clausii (strain KSM-K16) (Alkalihalobacillus clausii).